A 175-amino-acid polypeptide reads, in one-letter code: Bifunctional protein PyrR (175 aa).

Residues 40–41, Arg85, 102–110, Arg135, and Val159 contribute to the substrate site; these read TR and DDVLYTGRT. Positions 98–110 match the PRPP-binding motif; it reads VIIIDDVLYTGRT.

This sequence belongs to the purine/pyrimidine phosphoribosyltransferase family. PyrR subfamily. Homodimer and homohexamer; in equilibrium.

It catalyses the reaction UMP + diphosphate = 5-phospho-alpha-D-ribose 1-diphosphate + uracil. Its function is as follows. Regulates transcriptional attenuation of the pyrimidine nucleotide (pyr) operon by binding in a uridine-dependent manner to specific sites on pyr mRNA. This disrupts an antiterminator hairpin in the RNA and favors formation of a downstream transcription terminator, leading to a reduced expression of downstream genes. Also displays a weak uracil phosphoribosyltransferase activity which is not physiologically significant. In Staphylococcus saprophyticus subsp. saprophyticus (strain ATCC 15305 / DSM 20229 / NCIMB 8711 / NCTC 7292 / S-41), this protein is Bifunctional protein PyrR.